The following is a 395-amino-acid chain: Transmembrane protein 79 (395 aa).

Positions 1–115 (MTEPETLALL…PPTKLEELPE (115 aa)) are disordered. Over 1–204 (MTEPETLALL…GREALRAVAS (204 aa)) the chain is Cytoplasmic. Residues 205 to 225 (VGAALILFPCLLYGAYAFLPF) form a helical membrane-spanning segment. The Extracellular segment spans residues 226-244 (DAPRLPTMSSRLIYTLRCG). The helical transmembrane segment at 245–265 (VFATFPIVLGILVYGLSLLCF) threads the bilayer. Over 266–290 (AALRPFGEPRREVEIHRQYVAQSVQ) the chain is Cytoplasmic. The chain crosses the membrane as a helical span at residues 291 to 311 (LFILYFFNLAVLSTYLPQDAL). Topologically, residues 312–313 (KL) are extracellular. A helical membrane pass occupies residues 314-334 (LPLLTGLFAISRLIYWLTFAV). Residues 335 to 343 (GRSFRGFGY) lie on the Cytoplasmic side of the membrane. Residues 344–364 (GLTFLPLLSMLLWNFYYMFVV) traverse the membrane as a helical segment. Topologically, residues 365–395 (EPERMLTASESRLDYPDHARSASDYRPRSRG) are extracellular.

The protein resides in the lysosome. Its subcellular location is the golgi apparatus. It is found in the trans-Golgi network. It localises to the membrane. In terms of biological role, contributes to the epidermal integrity and skin barrier function. Plays a role in the lamellar granule (LG) secretory system and in the stratum corneum (SC) epithelial cell formation. This chain is Transmembrane protein 79 (TMEM79), found in Bos taurus (Bovine).